Reading from the N-terminus, the 742-residue chain is Synaptic vesicle glycoprotein 2A (742 aa).

Residues Met-1–Asp-57 are interaction with SYT1. Residues Met-1 to Tyr-169 lie on the Cytoplasmic side of the membrane. Basic and acidic residues predominate over residues Glu-40 to Phe-49. The segment at Glu-40–Glu-144 is disordered. Phosphoserine occurs at positions 80 and 81. Residue Thr-84 is modified to Phosphothreonine. A compositionally biased stretch (gly residues) spans Val-122 to Gly-137. Ser-127 carries the phosphoserine modification. Residues Phe-170–Leu-190 form a helical membrane-spanning segment. The Extracellular portion of the chain corresponds to Pro-191–Gly-205. A helical membrane pass occupies residues Met-206 to Ala-226. Residues Asp-227 to Gln-233 lie on the Cytoplasmic side of the membrane. Residues Cys-234–Gly-254 form a helical membrane-spanning segment. The Extracellular segment spans residues Tyr-255–Arg-262. A helical transmembrane segment spans residues Leu-263 to Phe-283. The Cytoplasmic portion of the chain corresponds to Leu-284–Ser-294. A helical transmembrane segment spans residues Trp-295 to Ile-315. The Extracellular portion of the chain corresponds to Pro-316–Arg-334. A helical membrane pass occupies residues Val-335 to Pro-355. Residues Glu-356–Thr-447 are Cytoplasmic-facing. Ser-393 carries the post-translational modification Phosphoserine. A helical transmembrane segment spans residues Leu-448–Phe-468. The Extracellular portion of the chain corresponds to Pro-469 to Tyr-598. Tyr-480 carries the phosphotyrosine modification. 3 N-linked (GlcNAc...) asparagine glycosylation sites follow: Asn-498, Asn-548, and Asn-573. A helical membrane pass occupies residues Phe-599–Met-619. The Cytoplasmic segment spans residues Asp-620–Arg-626. Residues Met-627–Ser-647 traverse the membrane as a helical segment. Residues Glu-648–Met-651 lie on the Extracellular side of the membrane. Residues Ile-652–Leu-672 traverse the membrane as a helical segment. Topologically, residues Thr-673–Ala-685 are cytoplasmic. The helical transmembrane segment at Phe-686–Val-708 threads the bilayer. The Extracellular portion of the chain corresponds to Gly-709–Lys-712. The chain crosses the membrane as a helical span at residues Ala-713–Leu-731. Topologically, residues Lys-732–Gln-742 are cytoplasmic.

It belongs to the major facilitator superfamily. As to quaternary structure, interacts with SYT1/synaptotagmin-1 in a calcium-dependent manner. Binds the adapter protein complex AP-2. Phosphorylation by CK1 of the N-terminal cytoplasmic domain regulates interaction with SYT1. In terms of processing, N-glycosylated.

The protein resides in the presynapse. It localises to the cytoplasmic vesicle. The protein localises to the secretory vesicle. Its subcellular location is the synaptic vesicle membrane. Plays a role in the control of regulated secretion in neural and endocrine cells, enhancing selectively low-frequency neurotransmission. Positively regulates vesicle fusion by maintaining the readily releasable pool of secretory vesicles. This Pongo abelii (Sumatran orangutan) protein is Synaptic vesicle glycoprotein 2A (SV2A).